A 363-amino-acid polypeptide reads, in one-letter code: Molybdenum import ATP-binding protein ModC (363 aa).

The ABC transporter domain maps to M1–Y232. ATP is bound at residue G30 to T37. One can recognise a Mop domain in the interval R292–D358.

The protein belongs to the ABC transporter superfamily. Molybdate importer (TC 3.A.1.8) family. The complex is composed of two ATP-binding proteins (ModC), two transmembrane proteins (ModB) and a solute-binding protein (ModA).

The protein localises to the cell inner membrane. It catalyses the reaction molybdate(out) + ATP + H2O = molybdate(in) + ADP + phosphate + H(+). Part of the ABC transporter complex ModABC involved in molybdenum import. Responsible for energy coupling to the transport system. The sequence is that of Molybdenum import ATP-binding protein ModC from Paramagnetospirillum magneticum (strain ATCC 700264 / AMB-1) (Magnetospirillum magneticum).